The following is a 275-amino-acid chain: Large ribosomal subunit protein uL2 (275 aa).

Disordered regions lie at residues 28–48 and 223–275; these read KPYA…NNGR and VVMN…RNKK.

Belongs to the universal ribosomal protein uL2 family. Part of the 50S ribosomal subunit. Forms a bridge to the 30S subunit in the 70S ribosome.

One of the primary rRNA binding proteins. Required for association of the 30S and 50S subunits to form the 70S ribosome, for tRNA binding and peptide bond formation. It has been suggested to have peptidyltransferase activity; this is somewhat controversial. Makes several contacts with the 16S rRNA in the 70S ribosome. The chain is Large ribosomal subunit protein uL2 from Photobacterium profundum (strain SS9).